A 101-amino-acid chain; its full sequence is Phosphoribosyl-AMP cyclohydrolase (101 aa).

Asp71 lines the Mg(2+) pocket. Position 72 (Cys72) interacts with Zn(2+). Positions 73 and 75 each coordinate Mg(2+). Zn(2+) contacts are provided by Cys88 and Cys95.

The protein belongs to the PRA-CH family. As to quaternary structure, homodimer. Requires Mg(2+) as cofactor. It depends on Zn(2+) as a cofactor.

Its subcellular location is the cytoplasm. The enzyme catalyses 1-(5-phospho-beta-D-ribosyl)-5'-AMP + H2O = 1-(5-phospho-beta-D-ribosyl)-5-[(5-phospho-beta-D-ribosylamino)methylideneamino]imidazole-4-carboxamide. Its pathway is amino-acid biosynthesis; L-histidine biosynthesis; L-histidine from 5-phospho-alpha-D-ribose 1-diphosphate: step 3/9. In terms of biological role, catalyzes the hydrolysis of the adenine ring of phosphoribosyl-AMP. The chain is Phosphoribosyl-AMP cyclohydrolase from Bacillus cereus (strain Q1).